The following is a 315-amino-acid chain: Small ribosomal subunit protein uS3 (315 aa).

Residues 38–106 (IRKMMSRGME…QVQLNILEVK (69 aa)) enclose the KH type-2 domain. A disordered region spans residues 211-315 (AEREAQEALQ…VANTPEKAEE (105 aa)). Basic residues predominate over residues 222 to 232 (QTRRERPRRGP). A compositionally biased stretch (low complexity) spans 265 to 315 (APAETPAGEAAATEPTAPVAEPATAAASAPAEAASAPAEAAVANTPEKAEE).

The protein belongs to the universal ribosomal protein uS3 family. As to quaternary structure, part of the 30S ribosomal subunit. Forms a tight complex with proteins S10 and S14.

Functionally, binds the lower part of the 30S subunit head. Binds mRNA in the 70S ribosome, positioning it for translation. In Frankia casuarinae (strain DSM 45818 / CECT 9043 / HFP020203 / CcI3), this protein is Small ribosomal subunit protein uS3.